The following is a 166-amino-acid chain: Small ribosomal subunit protein uS5 (166 aa).

The region spanning 11–74 (LQEKLIAVNR…EKARRNMINV (64 aa)) is the S5 DRBM domain.

It belongs to the universal ribosomal protein uS5 family. In terms of assembly, part of the 30S ribosomal subunit. Contacts proteins S4 and S8.

With S4 and S12 plays an important role in translational accuracy. Its function is as follows. Located at the back of the 30S subunit body where it stabilizes the conformation of the head with respect to the body. This chain is Small ribosomal subunit protein uS5, found in Haemophilus influenzae (strain 86-028NP).